The primary structure comprises 504 residues: Peptidyl-prolyl cis-trans isomerase CYP57 (504 aa).

Residue serine 2 is modified to N-acetylserine. The region spanning 16–167 (IVNTTHGPID…DPAPKILSVE (152 aa)) is the PPIase cyclophilin-type domain. A coiled-coil region spans residues 204–274 (NLLSFGEEAE…AKKEAAQKDK (71 aa)). Composition is skewed to basic and acidic residues over residues 237–275 (RLLK…KDKS), 344–354 (EDEKPRMEKLS), and 364–374 (AKAEHMEKGDT). 3 disordered regions span residues 237 to 374 (RLLK…KGDT), 416 to 441 (AKPF…KEED), and 482 to 504 (EKFN…KSLA). The span at 416–434 (AKPFTSSNEPVVLTSSSEP) shows a compositional bias: polar residues. Residues 494-504 (REREWSGKSLA) are compositionally biased toward basic and acidic residues.

Belongs to the cyclophilin-type PPIase family. Ubiquitous.

It is found in the nucleus. The protein resides in the cytoplasm. It carries out the reaction [protein]-peptidylproline (omega=180) = [protein]-peptidylproline (omega=0). Its function is as follows. PPIases accelerate the folding of proteins. It catalyzes the cis-trans isomerization of proline imidic peptide bonds in oligopeptides. Involved in plant response to pathogen infection by increasing PAD4 expression in absence of EDS1 up-regulation. The polypeptide is Peptidyl-prolyl cis-trans isomerase CYP57 (CYP57) (Arabidopsis thaliana (Mouse-ear cress)).